The following is a 226-amino-acid chain: Large ribosomal subunit protein uL1 (226 aa).

This sequence belongs to the universal ribosomal protein uL1 family. As to quaternary structure, part of the 50S ribosomal subunit.

Its function is as follows. Binds directly to 23S rRNA. The L1 stalk is quite mobile in the ribosome, and is involved in E site tRNA release. Protein L1 is also a translational repressor protein, it controls the translation of the L11 operon by binding to its mRNA. The chain is Large ribosomal subunit protein uL1 from Mycoplasma genitalium (strain ATCC 33530 / DSM 19775 / NCTC 10195 / G37) (Mycoplasmoides genitalium).